Consider the following 123-residue polypeptide: Ribulose bisphosphate carboxylase small subunit, chloroplastic 1 (123 aa).

Met-1 carries the methionine derivative modification.

Belongs to the RuBisCO small chain family. As to quaternary structure, heterohexadecamer of 8 large and 8 small subunits.

The protein localises to the plastid. It localises to the chloroplast. Its function is as follows. RuBisCO catalyzes two reactions: the carboxylation of D-ribulose 1,5-bisphosphate, the primary event in carbon dioxide fixation, as well as the oxidative fragmentation of the pentose substrate. Both reactions occur simultaneously and in competition at the same active site. Although the small subunit is not catalytic it is essential for maximal activity. The sequence is that of Ribulose bisphosphate carboxylase small subunit, chloroplastic 1 from Spinacia oleracea (Spinach).